The sequence spans 341 residues: S-adenosylmethionine:tRNA ribosyltransferase-isomerase (341 aa).

It belongs to the QueA family. In terms of assembly, monomer.

It localises to the cytoplasm. It catalyses the reaction 7-aminomethyl-7-carbaguanosine(34) in tRNA + S-adenosyl-L-methionine = epoxyqueuosine(34) in tRNA + adenine + L-methionine + 2 H(+). It participates in tRNA modification; tRNA-queuosine biosynthesis. Functionally, transfers and isomerizes the ribose moiety from AdoMet to the 7-aminomethyl group of 7-deazaguanine (preQ1-tRNA) to give epoxyqueuosine (oQ-tRNA). This is S-adenosylmethionine:tRNA ribosyltransferase-isomerase from Clostridioides difficile (strain 630) (Peptoclostridium difficile).